The primary structure comprises 308 residues: MTSKLEQLKQFTTVVADTGDLDAITRLKPVDATTNPSLLLKAAAIPGYADLLKQVKADAKGNVDLACDKFAVAVGSGILKVIPGRISTEVDARLSFDEPALLNKARQLIALYEAAGVAKERVLIKLASTWEGIRAAEQLEKEGIQTNLTLLFSFAQAQACADAGVFLISPFVGRIYDWYKKSTGQEYVGAEDPGVQSVTRIYNYYKANGYNTVVMGASFRNIGQIEQLAGCDRLTISPELLQQLSDDQGELPQVLKPGNAGEAKQHLNESQFRWAMNEDAMGTEKLAEGIRQFARDQEKLEKLIAEKA.

The active-site Schiff-base intermediate with substrate is lysine 125.

The protein belongs to the transaldolase family. Type 1 subfamily. Homodimer.

It is found in the cytoplasm. It catalyses the reaction D-sedoheptulose 7-phosphate + D-glyceraldehyde 3-phosphate = D-erythrose 4-phosphate + beta-D-fructose 6-phosphate. It functions in the pathway carbohydrate degradation; pentose phosphate pathway; D-glyceraldehyde 3-phosphate and beta-D-fructose 6-phosphate from D-ribose 5-phosphate and D-xylulose 5-phosphate (non-oxidative stage): step 2/3. Functionally, transaldolase is important for the balance of metabolites in the pentose-phosphate pathway. The sequence is that of Transaldolase from Pseudomonas putida (strain ATCC 47054 / DSM 6125 / CFBP 8728 / NCIMB 11950 / KT2440).